The primary structure comprises 132 residues: Small ribosomal subunit protein uS8 (132 aa).

This sequence belongs to the universal ribosomal protein uS8 family. Part of the 30S ribosomal subunit. Contacts proteins S5 and S12.

Functionally, one of the primary rRNA binding proteins, it binds directly to 16S rRNA central domain where it helps coordinate assembly of the platform of the 30S subunit. The polypeptide is Small ribosomal subunit protein uS8 (Xanthomonas campestris pv. campestris (strain 8004)).